We begin with the raw amino-acid sequence, 217 residues long: Homologous-pairing protein 2 homolog (217 aa).

The tract at residues 89–117 (LDASIMALTAKVQGLQQSCRHMEAELKEL) is interaction with NR3C1, homodimerization and transcriptional activation almost abolished when missing. Positions 93 to 153 (IMALTAKVQG…LKNIKAATNH (61 aa)) form a coiled coil. The segment at 118-182 (TSALTTPEMQ…WRKRKRMTTE (65 aa)) is DNA-binding. The segment at 118 to 182 (TSALTTPEMQ…WRKRKRMTTE (65 aa)) is interaction with NR3C1 decreased when missing.

This sequence belongs to the HOP2 family. Forms a stable heterodimer with MND1. Interacts with PSMC3/TBP1. Interacts with the DNA-binding domain of the nuclear receptors NR3C1/GR, ESR2/ER-beta, THRB and RXRA. In terms of processing, phosphorylated by PKA, PKC and MAPK.

The protein resides in the nucleus. In terms of biological role, plays an important role in meiotic recombination. Stimulates DMC1-mediated strand exchange required for pairing homologous chromosomes during meiosis. The complex PSMC3IP/MND1 binds DNA, stimulates the recombinase activity of DMC1 as well as DMC1 D-loop formation from double-strand DNA. This complex stabilizes presynaptic RAD51 and DMC1 filaments formed on single strand DNA to capture double-strand DNA. This complex stimulates both synaptic and presynaptic critical steps in RAD51 and DMC1-promoted homologous pairing. May inhibit HIV-1 viral protein TAT activity and modulate the activity of proteasomes through association with PSMC3. Plays a role as a coactivator in nuclear receptor-mediated transcription. The protein is Homologous-pairing protein 2 homolog (Psmc3ip) of Rattus norvegicus (Rat).